Reading from the N-terminus, the 391-residue chain is Elongation factor Tu (391 aa).

Residues 10 to 201 (KPHVNIGTIG…AVDEYIPTPA (192 aa)) form the tr-type G domain. The tract at residues 19–26 (GHVDHGKT) is G1. Position 19-26 (19-26 (GHVDHGKT)) interacts with GTP. Mg(2+) is bound at residue threonine 26. Residues 55–59 (GITIS) are G2. Residues 76–79 (DCPG) are G3. GTP contacts are provided by residues 76-80 (DCPGH) and 131-134 (NKVD). A G4 region spans residues 131 to 134 (NKVD). The segment at 169–171 (SAL) is G5.

The protein belongs to the TRAFAC class translation factor GTPase superfamily. Classic translation factor GTPase family. EF-Tu/EF-1A subfamily. In terms of assembly, monomer.

The protein localises to the cytoplasm. The enzyme catalyses GTP + H2O = GDP + phosphate + H(+). In terms of biological role, GTP hydrolase that promotes the GTP-dependent binding of aminoacyl-tRNA to the A-site of ribosomes during protein biosynthesis. This Cereibacter sphaeroides (strain ATCC 17025 / ATH 2.4.3) (Rhodobacter sphaeroides) protein is Elongation factor Tu.